Reading from the N-terminus, the 274-residue chain is MQKVVKLNNIKIGNDLPFVLITGPCQIEGKDHALFMAEKLVKLTSKLEIPFIYKSSFDKANRTSVHGIRGVGIEKGLEILSKVKSEFDCPIVTDVHSESQCTATAEVADILQIPAFLCRQTDLLQAAAKTGKIVKVKKGQFLAPWDMKNVQTKLETFGVKDILFTERGACFGYNNLVSDMRSLAIMAELNVPVVFDATHSVQQPGGLGGSTGGERKYVELLAKAATSVGIAGMYMEVHQDPDNAPSDGPCMMKLDNLESILIKLKKYDKITKEK.

Belongs to the KdsA family.

The protein localises to the cytoplasm. It catalyses the reaction D-arabinose 5-phosphate + phosphoenolpyruvate + H2O = 3-deoxy-alpha-D-manno-2-octulosonate-8-phosphate + phosphate. Its pathway is carbohydrate biosynthesis; 3-deoxy-D-manno-octulosonate biosynthesis; 3-deoxy-D-manno-octulosonate from D-ribulose 5-phosphate: step 2/3. The protein operates within bacterial outer membrane biogenesis; lipopolysaccharide biosynthesis. This Rickettsia rickettsii (strain Iowa) protein is 2-dehydro-3-deoxyphosphooctonate aldolase.